A 287-amino-acid polypeptide reads, in one-letter code: 2-dehydro-3-deoxyphosphooctonate aldolase (287 aa).

Belongs to the KdsA family.

The protein localises to the cytoplasm. It carries out the reaction D-arabinose 5-phosphate + phosphoenolpyruvate + H2O = 3-deoxy-alpha-D-manno-2-octulosonate-8-phosphate + phosphate. The protein operates within carbohydrate biosynthesis; 3-deoxy-D-manno-octulosonate biosynthesis; 3-deoxy-D-manno-octulosonate from D-ribulose 5-phosphate: step 2/3. Its pathway is bacterial outer membrane biogenesis; lipopolysaccharide biosynthesis. The polypeptide is 2-dehydro-3-deoxyphosphooctonate aldolase (Nitrobacter winogradskyi (strain ATCC 25391 / DSM 10237 / CIP 104748 / NCIMB 11846 / Nb-255)).